The chain runs to 416 residues: Enolase (416 aa).

Q156 provides a ligand contact to (2R)-2-phosphoglycerate. E200 functions as the Proton donor in the catalytic mechanism. Mg(2+) contacts are provided by D236, E281, and D308. Residues K333, R362, S363, and K384 each coordinate (2R)-2-phosphoglycerate. Catalysis depends on K333, which acts as the Proton acceptor.

The protein belongs to the enolase family. Requires Mg(2+) as cofactor.

The protein resides in the cytoplasm. It is found in the secreted. The protein localises to the cell surface. The catalysed reaction is (2R)-2-phosphoglycerate = phosphoenolpyruvate + H2O. It participates in carbohydrate degradation; glycolysis; pyruvate from D-glyceraldehyde 3-phosphate: step 4/5. In terms of biological role, catalyzes the reversible conversion of 2-phosphoglycerate (2-PG) into phosphoenolpyruvate (PEP). It is essential for the degradation of carbohydrates via glycolysis. The protein is Enolase of Methanothermobacter thermautotrophicus (strain ATCC 29096 / DSM 1053 / JCM 10044 / NBRC 100330 / Delta H) (Methanobacterium thermoautotrophicum).